Here is a 341-residue protein sequence, read N- to C-terminus: Protein quaking-A (341 aa).

The KH domain occupies 87 to 153 (FVPVKEYPDY…WEHLNEDLHV (67 aa)). The short motif at 276–279 (PPTP) is the SH3-binding element. Positions 324–330 (RVHPYQR) match the Nuclear localization signal motif.

The protein belongs to the quaking family. Homodimer; does not require RNA to homodimerize.

The protein localises to the cytoplasm. It is found in the nucleus. Its function is as follows. RNA reader protein, which recognizes and binds specific RNAs, thereby regulating RNA metabolic processes, such as pre-mRNA splicing, circular RNA (circRNA) formation, mRNA export, mRNA stability and/or translation. Involved in various cellular processes, such as mRNA storage into stress granules, apoptosis, interferon response, glial cell fate and development. Binds to the 5'-NACUAAY-N(1,20)-UAAY-3' RNA core sequence. Acts as a mRNA modification reader that specifically recognizes and binds mRNA transcripts modified by internal N(7)-methylguanine (m7G). Promotes the formation of circular RNAs (circRNAs): acts by binding to sites flanking circRNA-forming exons. CircRNAs are produced by back-splicing circularization of pre-mRNAs. Required to protect and promote stability of mRNAs which promotes oligodendrocyte differentiation. Acts as an important regulator of muscle development: required during early skeletal myofibril formation by regulating the accumulation of the muscle-specific tropomyosin-3 (tpm3) transcripts. This chain is Protein quaking-A, found in Danio rerio (Zebrafish).